The following is a 356-amino-acid chain: tRNA-specific 2-thiouridylase MnmA (356 aa).

ATP contacts are provided by residues 6–13 and Leu-32; that span reads GMSGGVDS. The Nucleophile role is filled by Cys-102. Cys-102 and Cys-200 are disulfide-bonded. Gly-127 provides a ligand contact to ATP. Residues 150–152 are interaction with tRNA; the sequence is RDQ. Cys-200 (cysteine persulfide intermediate) is an active-site residue. Residues 302-303 form an interaction with tRNA region; the sequence is RY.

The protein belongs to the MnmA/TRMU family.

Its subcellular location is the cytoplasm. The catalysed reaction is S-sulfanyl-L-cysteinyl-[protein] + uridine(34) in tRNA + AH2 + ATP = 2-thiouridine(34) in tRNA + L-cysteinyl-[protein] + A + AMP + diphosphate + H(+). Catalyzes the 2-thiolation of uridine at the wobble position (U34) of tRNA, leading to the formation of s(2)U34. The sequence is that of tRNA-specific 2-thiouridylase MnmA from Aquifex aeolicus (strain VF5).